The sequence spans 7073 residues: Replicase polyprotein 1ab (7073 aa).

The Cytoplasmic portion of the chain corresponds to 1–2202; that stretch reads MESLVLGVNE…NYVKSPKFSK (2202 aa). Positions 12 to 127 constitute a CoV Nsp1 globular domain; sequence THVQLSLPVL…YRNVLLRKNG (116 aa). The BetaCoV Nsp1 C-terminal domain maps to 148–179; that stretch reads ELGTDPIEDYEQNWNTKHGSGALRELTRELNG. A CoV Nsp2 N-terminal domain is found at 183–456; sequence TRYVDNNFCG…NEDLLEILSR (274 aa). C200, C231, H234, H236, C323, C326, C341, C344, C370, C373, H382, and C416 together coordinate Zn(2+). The tract at residues 200–236 is C2H2; sequence CIKDFLARAGKSMCTLSEQLDYIESKRGVYCCRDHEH. The segment at 323–344 is C4; sequence CNHCDEVSWQTCDFLKATCEHC. The tract at residues 370-416 is C2HC; that stretch reads CPACQDPEIGPEHSVADYHNHSNIETRLRKGGRTRCFGGCVFAYVGC. The 231-residue stretch at 458 to 688 folds into the CoV Nsp2 middle domain; the sequence is RVNINIVGDF…IDVVNKALEM (231 aa). A CoV Nsp2 C-terminal domain is found at 690–818; that stretch reads IDQVTIAGAK…TNNVFRLKGG (129 aa). In terms of domain architecture, Ubiquitin-like 1 spans 822–930; sequence KGVTFGEDTV…MYCSFYPPDE (109 aa). 2 disordered regions span residues 972–1003 and 1175–1198; these read RVEEEEEEDWLDDTTEQSEIEPEPEPTPEEPV and RVEAPKQEEPPNTEDSKTEEKSVV. Residues 974-999 show a composition bias toward acidic residues; sequence EEEEEEDWLDDTTEQSEIEPEPEPTP. The Macro 1 domain occupies 1003 to 1169; it reads VNQFTGYLKL…LYEQVVMDYL (167 aa). 2 Macro domains span residues 1207–1335 and 1343–1470; these read KIKA…LPSE and ILGT…TSSS. The DPUP domain occupies 1472 to 1538; the sequence is TSEEHFVETV…SLDKLKSLLS (67 aa). Residues 1542–1597 form the Ubiquitin-like 2 domain; it reads VKTIKVFTTVDNTNLHTQLVDMSMTYGQQFGPTYLDGADVTKIKPHVNHEGKTFFV. One can recognise a Peptidase C16 domain in the interval 1611 to 1875; the sequence is YYHTLDESFL…YTEIEPKLDG (265 aa). C1651 (for PL-PRO activity) is an active-site residue. Zn(2+) is bound by residues C1729, C1732, C1764, and C1766. Residues 1729-1766 form a C4-type zinc finger; that stretch reads CKHCGQKTTTLTGVEAVMYMGTLSYDNLKTGVSIPCVC. Residues H1812 and D1826 each act as for PL-PRO activity in the active site. A Nucleic acid-binding domain is found at 1888-1998; it reads PIDLVPTQPL…CLWSTKPVDT (111 aa). The G2M domain occupies 2023-2132; it reads PTSEEVVENP…LGQAAITTSN (110 aa). The helical transmembrane segment at 2203 to 2223 threads the bilayer; the sequence is LFTIAMWLLLLSICLGSLICV. Residues 2203 to 2324 are HD1; the sequence is LFTIAMWLLL…FYLLGLSAIM (122 aa). One can recognise a 3Ecto domain in the interval 2224–2294; sequence TAAFGVLLSN…QVTISSYKLD (71 aa). Topologically, residues 2224-2303 are lumenal; the sequence is TAAFGVLLSN…DLTILGLAAE (80 aa). Intrachain disulfides connect C2240/C2268 and C2259/C2265. The chain crosses the membrane as a helical span at residues 2304–2324; sequence WVLAYMLFTKFFYLLGLSAIM. At 2325 to 2754 the chain is on the cytoplasmic side; it reads QVFFGYFASH…TCFKLMLKAT (430 aa). The Y1 stretch occupies residues 2372–2462; the sequence is KSYVHIMDGC…QFKRPINPTD (91 aa). A CoV Nsp3 Y domain is found at 2372 to 2740; the sequence is KSYVHIMDGC…ITTKISLKGG (369 aa). Zn(2+)-binding residues include H2376, C2381, C2386, C2389, C2422, H2425, C2429, and C2432. The interval 2376 to 2389 is ZF1; the sequence is HIMDGCTSSTCMMC. Positions 2422–2432 are ZF2; the sequence is CKTHNWNCLNC. Residues 2463–2557 form a Y2 region; it reads QSSYIVDSVA…LLDQALVSDV (95 aa). The coV-Y stretch occupies residues 2463 to 2740; sequence QSSYIVDSVA…ITTKISLKGG (278 aa). A Y3 region spans residues 2558–2639; sequence GDSTEVSVKM…ECLKLSHHSD (82 aa). The tract at residues 2640–2740 is Y4; sequence LEVTGDSCNN…ITTKISLKGG (101 aa). Residues 2755-2775 traverse the membrane as a helical segment; the sequence is LLCVLAALVCYIVMPVHTLSI. Positions 2755 to 3125 are HD2; that stretch reads LLCVLAALVC…WITAIYVFCI (371 aa). The Lumenal segment spans residues 2776-3021; sequence HDGYTNEIIG…VQPVGALDVS (246 aa). The helical transmembrane segment at 3022–3042 threads the bilayer; that stretch reads ASVVAGGIIAILVTCAAYYFM. At 3043-3076 the chain is on the cytoplasmic side; it reads KFRRVFGEYNHVVAANALLFLMSFTILCLVPAYS. The chain crosses the membrane as a helical span at residues 3077–3097; that stretch reads FLPGVYSVFYLYLTFYFTNDV. The Lumenal portion of the chain corresponds to 3098 to 3104; the sequence is SFLAHLQ. Residues 3105-3125 form a helical membrane-spanning segment; it reads WFAMFSPIVPFWITAIYVFCI. At 3126 to 3563 the chain is on the cytoplasmic side; that stretch reads SLKHCHWFFN…KGTHHWMLLT (438 aa). The region spanning 3142 to 3240 is the Nsp4C domain; it reads VMFNGVTFST…QTSITSAVLQ (99 aa). The region spanning 3241–3546 is the Peptidase C30 domain; that stretch reads SGFRKMAFPS…VRQCSGVTFQ (306 aa). Active-site for 3CL-PRO activity residues include H3281 and C3385. The chain crosses the membrane as a helical span at residues 3564 to 3584; sequence FLTSLLILVQSTQWSLFFFVY. The interval 3564–3776 is HD3; sequence FLTSLLILVQ…CCCYFGLFCL (213 aa). E3585 is a topological domain (lumenal). The chain crosses the membrane as a helical span at residues 3586–3606; sequence NAFLPFTLGIMAIAACAMLLV. Residues 3607–3611 lie on the Cytoplasmic side of the membrane; the sequence is KHKHA. Residues 3612 to 3632 form a helical membrane-spanning segment; it reads FLCLFLLPSLATVAYFNMVYM. At 3633–3657 the chain is on the lumenal side; the sequence is PASWVMRIMTWLELADTSLSGYRLK. A helical transmembrane segment spans residues 3658-3678; sequence DCVMYASALVLLILMTARTVY. The Cytoplasmic portion of the chain corresponds to 3679 to 3727; that stretch reads DDAARRVWTLMNVITLVYKVYYGNALDQAISMWALVISVTSNYSGVVTT. A helical membrane pass occupies residues 3728–3748; that stretch reads IMFLARAIVFVCVEYYPLLFI. Over 3749–3755 the chain is Lumenal; the sequence is TGNTLQC. A helical membrane pass occupies residues 3756 to 3776; sequence IMLVYCFLGYCCCCYFGLFCL. The Cytoplasmic segment spans residues 3777-7073; sequence LNRYFRLTLG…VVSSDILVNN (3297 aa). Residues 3837-3919 enclose the RdRp Nsp7 cofactor domain; sequence SKMSDVKCTS…EMLDNRATLQ (83 aa). Residues 3920–4117 form the RdRp Nsp8 cofactor domain; that stretch reads AIASEFSSLP…LRANSAVKLQ (198 aa). The 113-residue stretch at 4118–4230 folds into the Nsp9 ssRNA-binding domain; sequence NNELSPVALR…GSLAATVRLQ (113 aa). Residues 4231 to 4369 enclose the ExoN/MTase coactivator domain; the sequence is AGNATEVPAN…CDQLREPLMQ (139 aa). Residues C4304, C4307, H4313, C4320, C4347, C4350, C4358, and C4360 each contribute to the Zn(2+) site. 2 zinc fingers span residues 4304 to 4320 and 4347 to 4360; these read CLYCRCHIDHPNPKGFC and CTVCGMWKGYGCSC. In terms of domain architecture, NiRAN spans 4376–4630; the sequence is FLNRVCGVSA…AAESHMDADL (255 aa). Mn(2+)-binding residues include N4578 and D4587. Residues 4635 to 4733 form the Nsp12 Interface domain; that stretch reads IKWDLLKYDF…HNQDVNLHSS (99 aa). The Zn(2+) site is built by H4664, C4670, C4675, C4679, and C4856. A Nsp12 RNA-dependent RNA polymerase domain is found at 4734 to 5301; the sequence is RLSFKELLVY…AMYTPHTVLQ (568 aa). Positions 4736 to 4950 are rdRp Fingers N-ter; that stretch reads SFKELLVYAA…HQKLLKSIAA (215 aa). The interval 4951–4989 is rdRp Palm N-ter; it reads TRGATVVIGTSKFYGGWHNMLKTVYSDVETPHLMGWDYP. Positions 4981-5143 constitute a RdRp catalytic domain; sequence PHLMGWDYPK…CYNSNYAAQG (163 aa). A rdRp Fingers C-ter region spans residues 4990–5048; that stretch reads KCDRAMPNMLRIMASLVLARKHNTCCNLSHRFYRLANECAQVLSEMVMCGGSLYVKPGG. Zn(2+)-binding residues include H5011, C5014, and C5015. Residues 5049 to 5184 form a rdRp Palm C-ter region; it reads TSSGDATTAY…TKGPHEFCSQ (136 aa). Residues S5128, D5129, and D5130 contribute to the active site. Residues 5185-5301 form a rdRp Thumb region; that stretch reads HTMLVKQGDD…AMYTPHTVLQ (117 aa). Residues 5302-5414 form the CV ZBD domain; sequence AVGACVLCNS…TDFNAIATCD (113 aa). Zn(2+) is bound by residues C5306, C5309, C5317, C5320, C5327, C5330, H5334, H5340, C5351, C5356, C5373, and H5376. In terms of domain architecture, (+)RNA virus helicase ATP-binding spans 5558–5739; it reads NISDEFSSNV…MKTIGPDMFL (182 aa). 5583-5590 serves as a coordination point for ATP; the sequence is GPPGTGKS. The region spanning 5740–5909 is the (+)RNA virus helicase C-terminal domain; sequence GTCRRCPAEI…TLQAENVTGL (170 aa). Positions 5974-6189 constitute an ExoN domain; the sequence is MFITREEAIR…RCLAVHECFV (216 aa). Active-site residues include D5992, E5994, and E6093. E5994 and E6093 together coordinate Mg(2+). The Zn(2+) site is built by C6109, C6112, C6128, H6131, H6159, C6163, and H6166. Active-site residues include H6170 and D6175. H6170 and D6175 together coordinate Mg(2+). Residue C6181 coordinates Zn(2+). The 232-residue stretch at 6198 to 6429 folds into the N7-MTase domain; sequence YPIIGDELRV…NLWNTFTRLQ (232 aa). An S-adenosyl-L-methionine-binding site is contributed by 6233-6239; that stretch reads DIGNPKA. Residues 6316 to 6330 are gpppA-binding; it reads CDGGSLYVNKHAFHT. Zn(2+)-binding residues include C6354, C6375, C6386, and H6389. The region spanning 6430–6490 is the Nsp15 N-terminal oligomerization domain; it reads SLENVAYNVV…NVAFELWAKR (61 aa). The region spanning 6491-6616 is the AV-Nsp11N/CoV-Nsp15M domain; the sequence is NIKPVPEIKI…YFKKVDGIIQ (126 aa). In terms of domain architecture, NendoU spans 6633-6772; it reads KPRSQMETDF…KDGHVETFYP (140 aa). Catalysis depends on residues H6663, H6678, K6718, K6821, D6905, K6945, and E6978. The 295-residue stretch at 6777 to 7071 folds into the Nidovirus-type SAM-dependent 2'-O-MTase domain; that stretch reads SQAWQPGVAM…RVVVSSDILV (295 aa).

The protein belongs to the coronaviruses polyprotein 1ab family. Interacts with host PHB and PHB2. As to quaternary structure, interacts with papain-like protease nsp3 and non-structural protein 6. In terms of assembly, monomer. Homodimer. Only the homodimer shows catalytic activity. Interacts with nsp8 and nsp12 to form the replication-transcription complex (RTC): nsp12, nsp7, two subunits of nsp8, and up to two subunits of nsp13. Eight copies of nsp7 and eight copies of nsp8 assemble to form a heterohexadecamer dsRNA-encircling ring structure. As to quaternary structure, interacts with nsp7, nsp13 and nsp12 to form the replication-transcription complex (RTC): nsp12, nsp7, two subunits of nsp8, and up to two subunits of nsp13. Eight copies of nsp7 and eight copies of nsp8 assemble to form a heterohexadecamer dsRNA-encircling ring structure. Interacts with ORF6 protein. In terms of assembly, homodimer. Interacts with nsp12. Homododecamer. Interacts with proofreading exoribonuclease nsp14 and 2'-O-methyltransferase nsp16; these interactions enhance nsp14 and nsp16 enzymatic activities. As to quaternary structure, interacts with nsp7 and nsp8 to form the replication-transcription complex (RTC): nsp12, nsp7, two subunits of nsp8, and up to two subunits of nsp13. Interacts with nsp9. In terms of assembly, interacts with nsp8 to form the replication-transcription complex (RTC): nsp12, nsp7, two subunits of nsp8, and up to two subunits of nsp13. Interacts (via N-terminus) with host DDX1. Interacts with non-structural protein 10. As to quaternary structure, homohexamer. In terms of assembly, interacts with nsp10. Requires Zn(2+) as cofactor. The cofactor is Mn(2+). Mg(2+) is required as a cofactor. Specific enzymatic cleavages in vivo by its own proteases yield mature proteins. 3C-like proteinase nsp5 liberates nsps 6-16 from the polyprotein. Papain-like and 3C-like proteinases are autocatalytically processed.

The protein localises to the host cytoplasm. The protein resides in the host endosome. Its subcellular location is the host membrane. It localises to the host Golgi apparatus. It is found in the host perinuclear region. The protein localises to the host endoplasmic reticulum. The protein resides in the host endoplasmic reticulum-Golgi intermediate compartment. The catalysed reaction is RNA(n) + a ribonucleoside 5'-triphosphate = RNA(n+1) + diphosphate. It catalyses the reaction ATP + H2O = ADP + phosphate + H(+). It carries out the reaction TSAVLQ-|-SGFRK-NH2 and SGVTFQ-|-GKFKK the two peptides corresponding to the two self-cleavage sites of the SARS 3C-like proteinase are the two most reactive peptide substrates. The enzyme exhibits a strong preference for substrates containing Gln at P1 position and Leu at P2 position.. The enzyme catalyses Thiol-dependent hydrolysis of ester, thioester, amide, peptide and isopeptide bonds formed by the C-terminal Gly of ubiquitin (a 76-residue protein attached to proteins as an intracellular targeting signal).. The catalysed reaction is a 5'-end (N(7)-methyl 5'-triphosphoguanosine)-ribonucleoside in mRNA + S-adenosyl-L-methionine = a 5'-end (N(7)-methyl 5'-triphosphoguanosine)-(2'-O-methyl-ribonucleoside) in mRNA + S-adenosyl-L-homocysteine + H(+). It catalyses the reaction uridylyl-uridylyl-ribonucleotide-RNA = a 3'-end uridylyl-2',3'-cyclophospho-uridine-RNA + a 5'-end dephospho-ribonucleoside-RNA. It carries out the reaction a 5'-end (5'-triphosphoguanosine)-ribonucleoside in mRNA + S-adenosyl-L-methionine = a 5'-end (N(7)-methyl 5'-triphosphoguanosine)-ribonucleoside in mRNA + S-adenosyl-L-homocysteine. The enzyme catalyses a 5'-end diphospho-ribonucleoside in mRNA + GTP + H(+) = a 5'-end (5'-triphosphoguanosine)-ribonucleoside in mRNA + diphosphate. With respect to regulation, inhibited by Remdesivir (GS-5734). In terms of biological role, multifunctional protein involved in the transcription and replication of viral RNAs. Contains the proteinases responsible for the cleavages of the polyprotein. Its function is as follows. Inhibits host translation by interacting with the 40S ribosomal subunit. The nsp1-40S ribosome complex further induces an endonucleolytic cleavage near the 5'UTR of host mRNAs, targeting them for degradation. Viral mRNAs are not susceptible to nsp1-mediated endonucleolytic RNA cleavage thanks to the presence of a 5'-end leader sequence and are therefore protected from degradation. By suppressing host gene expression, nsp1 facilitates efficient viral gene expression in infected cells and evasion from host immune response. May disrupt nuclear pore function by binding and displacing host NUP93. May play a role in the modulation of host cell survival signaling pathway by interacting with host PHB and PHB2. Indeed, these two proteins play a role in maintaining the functional integrity of the mitochondria and protecting cells from various stresses. Functionally, responsible for the cleavages located at the N-terminus of the replicase polyprotein. In addition, PL-PRO possesses a deubiquitinating/deISGylating activity and processes both 'Lys-48'- and 'Lys-63'-linked polyubiquitin chains from cellular substrates. Plays a role in host membrane rearrangement that leads to creation of cytoplasmic double-membrane vesicles (DMV) necessary for viral replication. Nsp3, nsp4 and nsp6 together are sufficient to form DMV. Antagonizes innate immune induction of type I interferon by blocking the phosphorylation, dimerization and subsequent nuclear translocation of host IRF3. Also prevents host NF-kappa-B signaling. In terms of biological role, plays a role in host membrane rearrangement that leads to creation of cytoplasmic double-membrane vesicles (DMV) necessary for viral replication. Alone appears incapable to induce membrane curvature, but together with nsp3 is able to induce paired membranes. Nsp3, nsp4 and nsp6 together are sufficient to form DMV. Its function is as follows. Cleaves the C-terminus of replicase polyprotein at 11 sites. Recognizes substrates containing the core sequence [ILMVF]-Q-|-[SGACN]. May cleave human NLRP1 in lung epithelial cells, thereby activating the NLRP1 inflammasome pathway. Also able to bind an ADP-ribose-1''-phosphate (ADRP). May cleave host ATP6V1G1 thereby modifying host vacuoles intracellular pH. Plays a role in host membrane rearrangement that leads to creation of cytoplasmic double-membrane vesicles (DMV) necessary for viral replication. Nsp3, nsp4 and nsp6 together are sufficient to form DMV. Plays a role in the initial induction of autophagosomes from host endoplasmic reticulum. Later, limits the expansion of these phagosomes that are no longer able to deliver viral components to lysosomes. Functionally, forms a hexadecamer with nsp8 (8 subunits of each) that may participate in viral replication by acting as a primase. Alternatively, may synthesize substantially longer products than oligonucleotide primers. In terms of biological role, forms a hexadecamer with nsp7 (8 subunits of each) that may participate in viral replication by acting as a primase. Alternatively, may synthesize substantially longer products than oligonucleotide primers. Its function is as follows. Forms a primer, NSP9-pU, which is utilized by the polymerase for the initiation of RNA chains. Interacts with ribosome signal recognition particle RNA (SRP). Together with NSP8, suppress protein integration into the cell membrane, thereby disrupting host immune defenses. Plays a pivotal role in viral transcription by stimulating both nsp14 3'-5' exoribonuclease and nsp16 2'-O-methyltransferase activities. Therefore plays an essential role in viral mRNAs cap methylation. Functionally, RNA-directed RNA polymerase that catalyzes the transcription of viral genomic and subgenomic RNAs. Acts in complex with nsp7 and nsp8 to transcribe both the minus and positive strands of genomic RNA. The kinase-like NiRAN domain of NSP12 attaches one or more nucleotides to the amino terminus of NSP9, forming a covalent RNA-protein intermediate that serves as transcription/replication primer. Subgenomic RNAs (sgRNAs) are formed by discontinuous transcription: The polymerase has the ability to pause at transcription-regulating sequences (TRS) and jump to the leader TRS, resulting in a major deletion. This creates a series of subgenomic RNAs that are replicated, transcribed and translated. In addition, Nsp12 is a subunit of the viral RNA capping enzyme that catalyzes the RNA guanylyltransferase reaction for genomic and sub-genomic RNAs. Subsequently, the NiRAN domain transfers RNA to GDP, and forms the core cap structure GpppA-RNA. In terms of biological role, multi-functional protein with a zinc-binding domain in N-terminus displaying RNA and DNA duplex-unwinding activities with 5' to 3' polarity. Activity of helicase is dependent on magnesium. Its function is as follows. Plays a role in viral RNA synthesis through two distinct activities. The N7-guanine methyltransferase activity plays a role in the formation of the cap structure GpppA-RNA. The proofreading exoribonuclease reduces the sensitivity of the virus to RNA mutagens during replication. This activity acts on both ssRNA and dsRNA in a 3'-5' direction. Plays a role in viral transcription/replication and prevents the simultaneous activation of host cell dsRNA sensors, such as MDA5/IFIH1, OAS, and PKR. Acts by degrading the 5'-polyuridines generated during replication of the poly(A) region of viral genomic and subgenomic RNAs. Catalyzes a two-step reaction in which a 2'3'-cyclic phosphate (2'3'-cP) is first generated by 2'-O transesterification, which is then hydrolyzed to a 3'-phosphate (3'-P). If not degraded, poly(U) RNA would hybridize with poly(A) RNA tails and activate host dsRNA sensors. Functionally, methyltransferase that mediates mRNA cap 2'-O-ribose methylation to the 5'-cap structure of viral mRNAs. N7-methyl guanosine cap is a prerequisite for binding of nsp16. Therefore plays an essential role in viral mRNAs cap methylation which is essential to evade immune system. This is Replicase polyprotein 1ab (rep) from Severe acute respiratory syndrome coronavirus (SARS-CoV).